Here is a 584-residue protein sequence, read N- to C-terminus: Mitochondrial sodium/calcium exchanger protein (584 aa).

The N-terminal stretch at 1-26 (MAGRRLNLRWALSVLCVLLMAETVSG) is a signal peptide. The Extracellular segment spans residues 27-95 (TRGSSTGAHI…GIFCHFPPSL (69 aa)). N-linked (GlcNAc...) asparagine glycosylation is present at N60. Residues 96–116 (LPLAVTLYVSWLLYLFLILGV) traverse the membrane as a helical segment. The Cytoplasmic segment spans residues 117–140 (TAAKFFCPNLSAISTTLKLSHNVA). The helical transmembrane segment at 141–161 (GVTFLAFGNGAPDIFSALVAF) threads the bilayer. Residues 162 to 168 (SDPHTAG) lie on the Extracellular side of the membrane. The helical transmembrane segment at 169 to 189 (LALGALFGAGVLVTTVVAGGI) threads the bilayer. Residues 190–200 (TILHPFMAASR) lie on the Cytoplasmic side of the membrane. Residues 201 to 221 (PFFRDIVFYMVAVFLTFLMLF) traverse the membrane as a helical segment. Topologically, residues 222 to 226 (RGRVT) are extracellular. Residues 227-247 (LAWALGYLGLYVFYVVTVILC) form a helical membrane-spanning segment. Topologically, residues 248–325 (TWIYQRQRRG…KWRRKSAYWK (78 aa)) are cytoplasmic. S258 is subject to Phosphoserine; by PKA. The helical transmembrane segment at 326–346 (ALKVFKLPVEFLLLLTVPVVD) threads the bilayer. The Extracellular portion of the chain corresponds to 347–360 (PDKDDQNWKRPLNC). A helical transmembrane segment spans residues 361-381 (LHLVISPLVVVLTLQSGTYGV). Residues 382 to 383 (YE) lie on the Cytoplasmic side of the membrane. The helical transmembrane segment at 384–404 (IGGLVPVWVVVVIAGTALASV) threads the bilayer. Topologically, residues 405–416 (TFFATSDSQPPR) are extracellular. A helical membrane pass occupies residues 417-437 (LHWLFAFLGFLTSALWINAAA). Residues 438-445 (TEVVNILR) are Cytoplasmic-facing. Residues 446–466 (SLGVVFRLSNTVLGLTLLAWG) form a helical membrane-spanning segment. Topologically, residues 467–487 (NSIGDAFSDFTLARQGYPRMA) are extracellular. The chain crosses the membrane as a helical span at residues 488 to 508 (FSACFGGIIFNILVGVGLGCL). Over 509–524 (LQISRSHTEVKLEPDG) the chain is Cytoplasmic. The helical transmembrane segment at 525–545 (LLVWVLAGALGLSLVFSLVSV) threads the bilayer. The Extracellular portion of the chain corresponds to 546 to 558 (PLQCFQLSRVYGF). The helical transmembrane segment at 559–579 (CLLLFYLNFLVVALLTEFGVI) threads the bilayer. The Cytoplasmic portion of the chain corresponds to 580-584 (HLKSM).

Belongs to the Ca(2+):cation antiporter (CaCA) (TC 2.A.19) family. SLC24A subfamily. In terms of processing, phosphorylation at Ser-258 by PKA prevents calcium overload. Present in pancreatic beta-cells (at protein level).

It is found in the mitochondrion inner membrane. It carries out the reaction Ca(2+)(in) + 3 Na(+)(out) = Ca(2+)(out) + 3 Na(+)(in). The enzyme catalyses 3 Li(+)(out) + Ca(2+)(in) = 3 Li(+)(in) + Ca(2+)(out). Its activity is regulated as follows. Inhibited by the sodium/calcium exchanger inhibitor CGP-37157. Strongly inhibited by zinc. Its function is as follows. Mitochondrial sodium/calcium antiporter that mediates sodium-dependent calcium efflux from mitochondrion, by mediating the exchange of 3 sodium ions per 1 calcium ion. Plays a central role in mitochondrial calcium homeostasis by mediating mitochondrial calcium extrusion: calcium efflux is essential for mitochondrial function and cell survival, notably in cardiomyocytes. Regulates rates of glucose-dependent insulin secretion in pancreatic beta-cells during the first phase of insulin secretion: acts by mediating efflux of calcium from mitochondrion, thereby affecting cytoplasmic calcium responses. Required for store-operated Ca(2+) entry (SOCE) and Ca(2+) release-activated Ca(2+) (CRAC) channel regulation: sodium transport by SLC8B1 leads to promote calcium-shuttling that modulates mitochondrial redox status, thereby regulating SOCE activity. Involved in B-lymphocyte chemotaxis. Able to transport Ca(2+) in exchange of either Li(+) or Na(+), explaining how Li(+) catalyzes Ca(2+) exchange. In contrast to other members of the family its function is independent of K(+). The sequence is that of Mitochondrial sodium/calcium exchanger protein from Homo sapiens (Human).